We begin with the raw amino-acid sequence, 85 residues long: Acyl carrier protein ScoB (85 aa).

In terms of domain architecture, Carrier spans 1 to 77 (MPAPLTLDGF…QWWQLLSARQ (77 aa)). Ser38 carries the post-translational modification O-(pantetheine 4'-phosphoryl)serine.

This sequence belongs to the acyl carrier protein (ACP) family. Requires pantetheine 4'-phosphate as cofactor.

It functions in the pathway lipid metabolism; fatty acid metabolism. Functionally, acyl-carrier protein (ACP) involved in the biosynthesis of a unique class of isonitrile lipopeptides (INLPs). Is the dedicated ACP for the loading of activated acyl groups catalyzed by ScoC. The sequence is that of Acyl carrier protein ScoB from Streptomyces coeruleorubidus.